Here is a 141-residue protein sequence, read N- to C-terminus: Nucleoside diphosphate kinase (141 aa).

ATP is bound by residues lysine 11, phenylalanine 59, arginine 87, threonine 93, arginine 104, and asparagine 114. Histidine 117 (pros-phosphohistidine intermediate) is an active-site residue.

This sequence belongs to the NDK family. In terms of assembly, homotetramer. Mg(2+) is required as a cofactor.

It localises to the cytoplasm. The enzyme catalyses a 2'-deoxyribonucleoside 5'-diphosphate + ATP = a 2'-deoxyribonucleoside 5'-triphosphate + ADP. The catalysed reaction is a ribonucleoside 5'-diphosphate + ATP = a ribonucleoside 5'-triphosphate + ADP. Its function is as follows. Major role in the synthesis of nucleoside triphosphates other than ATP. The ATP gamma phosphate is transferred to the NDP beta phosphate via a ping-pong mechanism, using a phosphorylated active-site intermediate. This is Nucleoside diphosphate kinase from Bordetella bronchiseptica (strain ATCC BAA-588 / NCTC 13252 / RB50) (Alcaligenes bronchisepticus).